Here is a 204-residue protein sequence, read N- to C-terminus: Phosphatidylserine decarboxylase proenzyme (204 aa).

Catalysis depends on Ser-169, which acts as the Schiff-base intermediate with substrate; via pyruvic acid. Pyruvic acid (Ser); by autocatalysis is present on Ser-169.

This sequence belongs to the phosphatidylserine decarboxylase family. PSD-A subfamily. As to quaternary structure, heterodimer of a large membrane-associated beta subunit and a small pyruvoyl-containing alpha subunit. It depends on pyruvate as a cofactor. In terms of processing, is synthesized initially as an inactive proenzyme. Formation of the active enzyme involves a self-maturation process in which the active site pyruvoyl group is generated from an internal serine residue via an autocatalytic post-translational modification. Two non-identical subunits are generated from the proenzyme in this reaction, and the pyruvate is formed at the N-terminus of the alpha chain, which is derived from the carboxyl end of the proenzyme. The post-translation cleavage follows an unusual pathway, termed non-hydrolytic serinolysis, in which the side chain hydroxyl group of the serine supplies its oxygen atom to form the C-terminus of the beta chain, while the remainder of the serine residue undergoes an oxidative deamination to produce ammonia and the pyruvoyl prosthetic group on the alpha chain.

Its subcellular location is the cell membrane. The catalysed reaction is a 1,2-diacyl-sn-glycero-3-phospho-L-serine + H(+) = a 1,2-diacyl-sn-glycero-3-phosphoethanolamine + CO2. Its pathway is phospholipid metabolism; phosphatidylethanolamine biosynthesis; phosphatidylethanolamine from CDP-diacylglycerol: step 2/2. Its function is as follows. Catalyzes the formation of phosphatidylethanolamine (PtdEtn) from phosphatidylserine (PtdSer). The polypeptide is Phosphatidylserine decarboxylase proenzyme (Solibacter usitatus (strain Ellin6076)).